The following is a 495-amino-acid chain: Pleckstrin homology domain-containing family O member 2 (495 aa).

Residues 18 to 120 enclose the PH domain; the sequence is TADKAGWIKK…WIKALNEGIN (103 aa). 2 positions are modified to phosphoserine: serine 165 and serine 168. Residues 171–411 form a disordered region; it reads LSRLDLDVPD…ESPQHPRLPK (241 aa). The segment covering 198–213 has biased composition (pro residues); it reads QEPPRALMPPVKPSPG. Threonine 233 is subject to Phosphothreonine. Over residues 235–244 the composition is skewed to polar residues; it reads DSASSGANPE. Phosphoserine is present on residues serine 236, serine 238, serine 239, serine 274, and serine 292. Phosphothreonine is present on threonine 296. Positions 324–335 are enriched in low complexity; that stretch reads SGVDASGSSQSS. The span at 336 to 350 shows a compositional bias: polar residues; sequence EAPETTSPEPTQVSV. Serine 395 is modified (phosphoserine). Residues 399–411 show a composition bias toward basic and acidic residues; sequence LLRESPQHPRLPK. A coiled-coil region spans residues 444–469; the sequence is CAESLLSQAVEQLRQATQVLQEMRDL.

This chain is Pleckstrin homology domain-containing family O member 2 (Plekho2), found in Mus musculus (Mouse).